Here is a 159-residue protein sequence, read N- to C-terminus: MTKTQKAEIIEVLSNEFKDAQSVIFCDYKGLSVSKLENLRKMARAKDTKVQVVKNTLATIALSNASLTGVELKDTNILVWGADSVATSKVCADFAKDNEKFVIKSAYVDREAADAAKVEAFAKLPGREELLAMLAATWMAPVTCFTIGLDALRQKKEEA.

This sequence belongs to the universal ribosomal protein uL10 family. As to quaternary structure, part of the ribosomal stalk of the 50S ribosomal subunit. The N-terminus interacts with L11 and the large rRNA to form the base of the stalk. The C-terminus forms an elongated spine to which L12 dimers bind in a sequential fashion forming a multimeric L10(L12)X complex.

Functionally, forms part of the ribosomal stalk, playing a central role in the interaction of the ribosome with GTP-bound translation factors. This is Large ribosomal subunit protein uL10 from Sulfurimonas denitrificans (strain ATCC 33889 / DSM 1251) (Thiomicrospira denitrificans (strain ATCC 33889 / DSM 1251)).